Here is a 101-residue protein sequence, read N- to C-terminus: Putative UPF0377 protein YBL108W (101 aa).

The protein belongs to the UPF0377 family.

This chain is Putative UPF0377 protein YBL108W, found in Saccharomyces cerevisiae (strain ATCC 204508 / S288c) (Baker's yeast).